Consider the following 548-residue polypeptide: Adenine deaminase (548 aa).

The protein belongs to the metallo-dependent hydrolases superfamily. Adenine deaminase family. The cofactor is Mn(2+).

It carries out the reaction adenine + H2O + H(+) = hypoxanthine + NH4(+). This chain is Adenine deaminase, found in Borreliella afzelii (strain PKo) (Borrelia afzelii).